The chain runs to 530 residues: GMP synthase [glutamine-hydrolyzing] (530 aa).

The Glutamine amidotransferase type-1 domain maps to 18–207; the sequence is TILVLDFGSQ…AVDICQAKTN (190 aa). Cysteine 94 functions as the Nucleophile in the catalytic mechanism. Catalysis depends on residues histidine 181 and glutamate 183. In terms of domain architecture, GMPS ATP-PPase spans 208–405; that stretch reads WSMENFIDTE…LGVPEDLVWR (198 aa). An ATP-binding site is contributed by 236 to 242; sequence SGGVDST. The XMP site is built by arginine 309, aspartate 467, lysine 522, and glutamate 528.

Homodimer. Mg(2+) is required as a cofactor.

It localises to the cytoplasm. Its subcellular location is the cytosol. The enzyme catalyses XMP + L-glutamine + ATP + H2O = GMP + L-glutamate + AMP + diphosphate + 2 H(+). Its pathway is purine metabolism; GMP biosynthesis; GMP from XMP (L-Gln route): step 1/1. In terms of biological role, catalyzes the conversion of xanthine monophosphate (XMP) to GMP in the presence of glutamine and ATP through an adenyl-XMP intermediate. In Candida albicans (strain SC5314 / ATCC MYA-2876) (Yeast), this protein is GMP synthase [glutamine-hydrolyzing] (GUA1).